The following is a 584-amino-acid chain: Cationic amino acid transporter 7, chloroplastic (584 aa).

A chloroplast-targeting transit peptide spans 1-49 (MEAQYRNHDGDTSFSSLRVYLNSLSDTPSRFSRRAVSVSTSYDEMSRVR). 14 consecutive transmembrane segments (helical) span residues 62–82 (WYDL…FVTT), 90–110 (AGPS…LSAF), 131–151 (ITFG…DYVL), 185–205 (GFNE…FVIC), 214–234 (VNMV…VMGF), 254–274 (FFPF…LSYI), 293–313 (IPMG…LMAI), 346–366 (VVGI…MLGQ), 396–416 (ASAF…LNVL), 417–437 (LNLV…AVIF), 449–469 (WPTL…TLVW), 480–500 (FILG…HCVV), 508–528 (FWGV…NIFL), and 540–560 (FGFF…HASY).

It belongs to the amino acid-polyamine-organocation (APC) superfamily. Cationic amino acid transporter (CAT) (TC 2.A.3.3) family.

It is found in the plastid. The protein resides in the chloroplast membrane. Permease involved in the transport of the cationic amino acids. The sequence is that of Cationic amino acid transporter 7, chloroplastic (CAT7) from Arabidopsis thaliana (Mouse-ear cress).